We begin with the raw amino-acid sequence, 273 residues long: MPELPEVETIRRSLSQHILERRIEEILIRWPGAVEGYEEKTFADAVRGLKFQSIERRGKYLLFTLEEGWSFIAHMRMTGRMVYHAQSQEPEKHTHVVLKLSSGEIHFTDTRKFGRLQLVRTEERLQQPSLARLGPEPLEEGFSAAELGRRLAPRKLAIKAALLDQTLVAGIGNIYADEALFRAGIAPERCANSLTKEEIEKLYPAICQVLEEGIAANGTSFRDYQDANGERGDFQKELKVYGRGGEPCKECGHTLVRIRLAGRSTVFCPCCQV.

Catalysis depends on Pro-2, which acts as the Schiff-base intermediate with DNA. The active-site Proton donor is the Glu-3. Catalysis depends on Lys-59, which acts as the Proton donor; for beta-elimination activity. The DNA site is built by His-93, Arg-111, and Arg-154. Residues 239-273 (KVYGRGGEPCKECGHTLVRIRLAGRSTVFCPCCQV) form an FPG-type zinc finger. The Proton donor; for delta-elimination activity role is filled by Arg-263.

The protein belongs to the FPG family. In terms of assembly, monomer. Zn(2+) is required as a cofactor.

It catalyses the reaction Hydrolysis of DNA containing ring-opened 7-methylguanine residues, releasing 2,6-diamino-4-hydroxy-5-(N-methyl)formamidopyrimidine.. It carries out the reaction 2'-deoxyribonucleotide-(2'-deoxyribose 5'-phosphate)-2'-deoxyribonucleotide-DNA = a 3'-end 2'-deoxyribonucleotide-(2,3-dehydro-2,3-deoxyribose 5'-phosphate)-DNA + a 5'-end 5'-phospho-2'-deoxyribonucleoside-DNA + H(+). In terms of biological role, involved in base excision repair of DNA damaged by oxidation or by mutagenic agents. Acts as a DNA glycosylase that recognizes and removes damaged bases. Has a preference for oxidized purines, such as 7,8-dihydro-8-oxoguanine (8-oxoG). Has AP (apurinic/apyrimidinic) lyase activity and introduces nicks in the DNA strand. Cleaves the DNA backbone by beta-delta elimination to generate a single-strand break at the site of the removed base with both 3'- and 5'-phosphates. The protein is Formamidopyrimidine-DNA glycosylase of Desulfitobacterium hafniense (strain DSM 10664 / DCB-2).